A 179-amino-acid chain; its full sequence is Replication restart protein DnaT (179 aa).

A disordered region spans residues 156–179; sequence GGLPKRDVNTVSEPDSQIPPGFRG.

Belongs to the DnaT family. Homooligomerizes. Interacts with PriB. Component of the replication restart primosome. Primosome assembly occurs via a 'hand-off' mechanism. PriA binds to replication forks, subsequently PriB then DnaT bind; DnaT then displaces ssDNA to generate the helicase loading substrate.

Its function is as follows. Involved in the restart of stalled replication forks, which reloads the replicative helicase on sites other than the origin of replication. Can function in multiple replication restart pathways. Displaces ssDNA from a PriB-ssDNA complex. Probably forms a spiral filament on ssDNA. The polypeptide is Replication restart protein DnaT (Escherichia coli O7:K1 (strain IAI39 / ExPEC)).